Reading from the N-terminus, the 200-residue chain is Recombination protein RecR (200 aa).

Residues 58-73 form a C4-type zinc finger; sequence CQKCHNISDTTLCSIC. Residues 81 to 176 enclose the Toprim domain; that stretch reads GLICVVENIQ…KLSNIARGVA (96 aa).

Belongs to the RecR family.

Its function is as follows. May play a role in DNA repair. It seems to be involved in an RecBC-independent recombinational process of DNA repair. It may act with RecF and RecO. The chain is Recombination protein RecR from Amoebophilus asiaticus (strain 5a2).